A 215-amino-acid polypeptide reads, in one-letter code: Ankyrin repeat domain-containing protein 49 (215 aa).

ANK repeat units lie at residues 81-110 (DGYT…NPNA) and 114-143 (LGWT…DVNA).

Interacts with Bdbt; interaction promotes the stability of both complex members.

It is found in the cytoplasm. The protein resides in the cytosol. It localises to the cell membrane. Functionally, required for regulating the establishment of planar cell polarity in the wing. Forms a complex with Bdbt which likely functions in the regulation of planar polarity by promoting the activity of Dco during planar polarity establishment. Within the complex, probably functions to stabilize Bdbt, while Bdbt directly promotes Dco activity in regulating phosphorylation of core proteins such as dsh, and asymmetric localization. This is Ankyrin repeat domain-containing protein 49 from Drosophila melanogaster (Fruit fly).